A 527-amino-acid chain; its full sequence is tRNA (uracil(54)-C(5))-methyltransferase (527 aa).

Residues 107-167 form the TRAM domain; that stretch reads PFERFQEIEV…DTYALADFLE (61 aa). Positions 182, 188, 191, and 276 each coordinate [4Fe-4S] cluster. Residues Q347, Y383, E404, and D451 each contribute to the S-adenosyl-L-methionine site. The active-site Nucleophile is the C478. The active-site Proton acceptor is E517.

Belongs to the class I-like SAM-binding methyltransferase superfamily. RNA M5U methyltransferase family.

It catalyses the reaction uridine(54) in tRNA + S-adenosyl-L-methionine = 5-methyluridine(54) in tRNA + S-adenosyl-L-homocysteine + H(+). Catalyzes the formation of 5-methyl-uridine at position 54 (m5U54) in all tRNA. May also have a role in tRNA stabilization or maturation. In Schizosaccharomyces pombe (strain 972 / ATCC 24843) (Fission yeast), this protein is tRNA (uracil(54)-C(5))-methyltransferase.